The chain runs to 1084 residues: Cellulose synthase A catalytic subunit 6 [UDP-forming] (1084 aa).

Met1 carries the post-translational modification N-acetylmethionine. The Cytoplasmic portion of the chain corresponds to 1–277; the sequence is MNTGGRLIAG…KSSKINPYRM (277 aa). Zn(2+) is bound by residues Cys39, Cys42, Cys58, Cys61, Cys66, Cys69, Cys81, and Cys84. The segment at 39–85 adopts an RING-type; degenerate zinc-finger fold; the sequence is CQICRDEIELTVDGEPFVACNECAFPVCRPCYEYERREGNQACPQCK. A helical membrane pass occupies residues 278-298; that stretch reads LIVLRLVILGLFFHYRILHPV. Residues 299–300 are Extracellular-facing; sequence KD. The helical transmembrane segment at 301 to 321 threads the bilayer; the sequence is AYALWLISVICEIWFAVSWVL. At 322–868 the chain is on the cytoplasmic side; that stretch reads DQFPKWYPIE…INSVVYPWTS (547 aa). Residues Ser360, Lys366, Glu367, and Asp396 each coordinate UDP-alpha-D-glucose. Residue Asp396 is part of the active site. Positions 450–476 form a coiled coil; the sequence is VRERRAMKRDYEEFKVKINALVATAQK. Lys537 is a UDP-alpha-D-glucose binding site. Lys538 and Asp562 together coordinate Mn(2+). Positions 675–703 form a coiled coil; the sequence is RKAKTVAADKKKKNREASKQIHALENIEE. Asp785 is a catalytic residue. Residues 869–889 traverse the membrane as a helical segment; it reads LPLIVYCSLPAICLLTGKFIV. Residues 890–894 are Extracellular-facing; the sequence is PEISN. A helical membrane pass occupies residues 895–915; sequence YASILFMALFSSIAITGILEM. Over 916–930 the chain is Cytoplasmic; sequence QWGKVGIDDWWRNEQ. Residues 931 to 951 traverse the membrane as a helical segment; that stretch reads FWVIGGVSAHLFALFQGLLKV. Over 952 to 980 the chain is Extracellular; it reads LAGVDTNFTVTSKAADDGEFSDLYLFKWT. Asn958 is a glycosylation site (N-linked (GlcNAc...) asparagine). Residues 981-1001 traverse the membrane as a helical segment; the sequence is SLLIPPMTLLIINVIGVIVGV. Topologically, residues 1002–1012 are cytoplasmic; sequence SDAISNGYDSW. Residues 1013–1033 traverse the membrane as a helical segment; sequence GPLFGRLFFALWVIIHLYPFL. The Extracellular portion of the chain corresponds to 1034 to 1042; it reads KGLLGKQDR. A helical membrane pass occupies residues 1043-1063; it reads MPTIIVVWSILLASILTLLWV. The Cytoplasmic portion of the chain corresponds to 1064–1084; the sequence is RVNPFVAKGGPILEICGLDCL.

It belongs to the glycosyltransferase 2 family. Plant cellulose synthase subfamily. Interacts with CESA1 and CESA3. Interacts with STL1 and STL2, but not with GOT1. Binds to CSI1 and CSI3. Interacts with PAT24/TIP1. Zn(2+) serves as cofactor. Requires Mn(2+) as cofactor. In terms of processing, S-acylated. Expressed in germinating seeds, seedlings, roots, stems, leaves and flowers. Not present in mature flowers.

The protein localises to the cell membrane. It carries out the reaction [(1-&gt;4)-beta-D-glucosyl](n) + UDP-alpha-D-glucose = [(1-&gt;4)-beta-D-glucosyl](n+1) + UDP + H(+). Its pathway is glycan metabolism; plant cellulose biosynthesis. Catalytic subunit of cellulose synthase terminal complexes ('rosettes'), required for beta-1,4-glucan microfibril crystallization, a major mechanism of the cell wall formation. Involved in the primary cell wall formation. The presence of each protein CESA1 and CESA6 is critical for cell expansion. The hypocotyl elongation is based on a CESA6-dependent cell elongation in dark and a CESA6-independent cell elongation in light. The transition between these two mechanisms requires photosynthesis and PHYB, but not CRY1. The CESA6-dependent cell elongation seems to be independent of gibberellic acid, auxin and ethylene. May be involved in sensitivity to isoxaben. Associates with and moves along cortical microtubules for the process of cellulose deposition. In Arabidopsis thaliana (Mouse-ear cress), this protein is Cellulose synthase A catalytic subunit 6 [UDP-forming].